The following is a 164-amino-acid chain: Thiol peroxidase (164 aa).

In terms of domain architecture, Thioredoxin spans 18-163; it reads INEGDFAPDF…FDAALAAYKN (146 aa). Catalysis depends on Cys-60, which acts as the Cysteine sulfenic acid (-SOH) intermediate. Cys-60 and Cys-93 form a disulfide bridge.

It belongs to the peroxiredoxin family. Tpx subfamily. Homodimer.

It catalyses the reaction a hydroperoxide + [thioredoxin]-dithiol = an alcohol + [thioredoxin]-disulfide + H2O. Its function is as follows. Thiol-specific peroxidase that catalyzes the reduction of hydrogen peroxide and organic hydroperoxides to water and alcohols, respectively. Plays a role in cell protection against oxidative stress by detoxifying peroxides. The polypeptide is Thiol peroxidase (Staphylococcus aureus (strain Mu50 / ATCC 700699)).